The sequence spans 375 residues: Growth/differentiation factor 8 (375 aa).

A signal peptide spans 1-18 (MQKLQIFVYIYLFVLIVA). Residues 19–266 (GPVDLNENSE…VTDTPKRSRR (248 aa)) constitute a propeptide that is removed on maturation. 2 N-linked (GlcNAc...) asparagine glycosylation sites follow: Asn-48 and Asn-71. 4 cysteine pairs are disulfide-bonded: Cys-272–Cys-282, Cys-281–Cys-340, Cys-309–Cys-372, and Cys-313–Cys-374.

Belongs to the TGF-beta family. In terms of assembly, homodimer; disulfide-linked. Interacts with WFIKKN2, leading to inhibit its activity. Interacts with FSTL3. In terms of processing, synthesized as large precursor molecule that undergoes proteolytic cleavage to generate an N-terminal propeptide and a disulfide linked C-terminal dimer, which is the biologically active molecule. The circulating form consists of a latent complex of the C-terminal dimer and other proteins, including its propeptide, which maintain the C-terminal dimer in a latent, inactive state. Ligand activation requires additional cleavage of the prodomain by a tolloid-like metalloproteinase.

It localises to the secreted. In terms of biological role, acts specifically as a negative regulator of skeletal muscle growth. This is Growth/differentiation factor 8 (MSTN) from Aepyceros melampus (Impala).